Here is a 390-residue protein sequence, read N- to C-terminus: GTPase Obg (390 aa).

In terms of domain architecture, Obg spans 1 to 159 (MKFVDEASVK…RELRLELLLL (159 aa)). An OBG-type G domain is found at 160 to 333 (ADVGMLGLPN…LCFKLGEFME (174 aa)). Residues 166–173 (GLPNAGKS), 191–195 (FTTLI), 213–216 (DIPG), 283–286 (NKVD), and 314–316 (SAV) each bind GTP. The Mg(2+) site is built by serine 173 and threonine 193.

This sequence belongs to the TRAFAC class OBG-HflX-like GTPase superfamily. OBG GTPase family. Monomer. Mg(2+) is required as a cofactor.

The protein resides in the cytoplasm. An essential GTPase which binds GTP, GDP and possibly (p)ppGpp with moderate affinity, with high nucleotide exchange rates and a fairly low GTP hydrolysis rate. Plays a role in control of the cell cycle, stress response, ribosome biogenesis and in those bacteria that undergo differentiation, in morphogenesis control. This chain is GTPase Obg, found in Vibrio atlanticus (strain LGP32) (Vibrio splendidus (strain Mel32)).